The sequence spans 151 residues: Flagellar assembly factor FliW 2 (151 aa).

Belongs to the FliW family. Interacts with translational regulator CsrA and flagellin(s).

The protein localises to the cytoplasm. Functionally, acts as an anti-CsrA protein, binds CsrA and prevents it from repressing translation of its target genes, one of which is flagellin. Binds to flagellin and participates in the assembly of the flagellum. This is Flagellar assembly factor FliW 2 from Desulfotalea psychrophila (strain LSv54 / DSM 12343).